The primary structure comprises 413 residues: Multifunctional CCA protein (413 aa).

Positions 8 and 11 each coordinate ATP. G8 and R11 together coordinate CTP. 2 residues coordinate Mg(2+): D21 and D23. Residues R91, R137, and R140 each coordinate ATP. Positions 91, 137, and 140 each coordinate CTP. An HD domain is found at 228 to 329 (TGIHTLMVLA…IKIFDKADLW (102 aa)).

This sequence belongs to the tRNA nucleotidyltransferase/poly(A) polymerase family. Bacterial CCA-adding enzyme type 1 subfamily. In terms of assembly, monomer. Can also form homodimers and oligomers. Mg(2+) is required as a cofactor. Requires Ni(2+) as cofactor.

The enzyme catalyses a tRNA precursor + 2 CTP + ATP = a tRNA with a 3' CCA end + 3 diphosphate. It catalyses the reaction a tRNA with a 3' CCA end + 2 CTP + ATP = a tRNA with a 3' CCACCA end + 3 diphosphate. Its function is as follows. Catalyzes the addition and repair of the essential 3'-terminal CCA sequence in tRNAs without using a nucleic acid template. Adds these three nucleotides in the order of C, C, and A to the tRNA nucleotide-73, using CTP and ATP as substrates and producing inorganic pyrophosphate. tRNA 3'-terminal CCA addition is required both for tRNA processing and repair. Also involved in tRNA surveillance by mediating tandem CCA addition to generate a CCACCA at the 3' terminus of unstable tRNAs. While stable tRNAs receive only 3'-terminal CCA, unstable tRNAs are marked with CCACCA and rapidly degraded. This is Multifunctional CCA protein from Shewanella woodyi (strain ATCC 51908 / MS32).